Here is a 384-residue protein sequence, read N- to C-terminus: Probable 2-heptyl-3-hydroxy-4(1H)-quinolone synthase AqdB2 (384 aa).

Belongs to the 3-hydroxybenzoate 6-hydroxylase family.

It catalyses the reaction 2-heptyl-4(1H)-quinolone + NADH + O2 + H(+) = 2-heptyl-3-hydroxy-4(1H)-quinolone + NAD(+) + H2O. In terms of biological role, involved in the degradation of the Pseudomonas aeruginosa quorum sensing signal molecule HHQ (2-heptyl-4-quinolone) to anthranilic acid. Probably catalyzes the hydroxylation of HHQ to PQS (2-heptyl-3-hydroxy-4-quinolone). In Rhodococcus erythropolis (Arthrobacter picolinophilus), this protein is Probable 2-heptyl-3-hydroxy-4(1H)-quinolone synthase AqdB2.